The chain runs to 61 residues: DNA-directed RNA polymerase subunit 12-like protein (61 aa).

Residues Cys-21, Cys-24, Cys-38, and Cys-41 each contribute to the Zn(2+) site.

It belongs to the archaeal Rpo12/eukaryotic RPC10 RNA polymerase subunit family.

Its subcellular location is the nucleus. In Arabidopsis thaliana (Mouse-ear cress), this protein is DNA-directed RNA polymerase subunit 12-like protein (NRPB12L).